The primary structure comprises 550 residues: Methyl-coenzyme M reductase I subunit alpha (550 aa).

Glutamine 147 provides a ligand contact to coenzyme F430. Coenzyme B contacts are provided by residues arginine 225, 256-257 (KH), and arginine 270. Histidine 257 carries the post-translational modification Pros-methylhistidine. Arginine 271 carries the post-translational modification 5-methylarginine. Tyrosine 333 serves as a coordination point for coenzyme M. At glutamine 400 the chain carries 2-methylglutamine. Tyrosine 444 contacts coenzyme M. Glycine 445 carries the 1-thioglycine modification. Aspartate 450 bears the (Z)-2,3-didehydroaspartate mark. Cysteine 452 carries the S-methylcysteine modification.

It belongs to the methyl-coenzyme M reductase alpha subunit family. As to quaternary structure, MCR is a hexamer of two alpha, two beta, and two gamma chains, forming a dimer of heterotrimers. Coenzyme F430 is required as a cofactor. In terms of processing, the alpha subunit contains six modified amino acids near the active site region. Is methylated on His-257, Arg-271, Gln-400 and Cys-452, probably by the action of specific S-adenosylmethionine-dependent methyltransferases. Also contains a thioglycine at position 445, forming a thiopeptide bond. Contains a didehydroaspartate residue at position 450. The methylation on C5 of Arg-271 is a post-translational methylation not essential in vivo, but which plays a role for the stability and structural integrity of MCR.

It localises to the cytoplasm. It carries out the reaction coenzyme B + methyl-coenzyme M = methane + coenzyme M-coenzyme B heterodisulfide. It participates in one-carbon metabolism; methyl-coenzyme M reduction; methane from methyl-coenzyme M: step 1/1. With respect to regulation, methyl-coenzyme M reductase activity is inhibited by 3-nitrooxypropanol (3-NOP) in vitro and in vivo, by oxidation of its active site Ni(I), which stops both growth and methanogenesis. Is also inhibited by the reaction product CoM-S-S-CoB. Functionally, component of the methyl-coenzyme M reductase (MCR) I that catalyzes the reductive cleavage of methyl-coenzyme M (CoM-S-CH3 or 2-(methylthio)ethanesulfonate) using coenzyme B (CoB or 7-mercaptoheptanoylthreonine phosphate) as reductant which results in the production of methane and the mixed heterodisulfide of CoB and CoM (CoM-S-S-CoB). This is the final step in methanogenesis. Neither N-6-mercaptohexanoylthreonine phosphate (H-S-HxoTP) nor N-8-mercaptooctanoylthreonine phosphate (H-SOcoTP) nor any other thiol compound such as CoA or CoM can substitute for CoB as the electron donor. This Methanothermobacter marburgensis (strain ATCC BAA-927 / DSM 2133 / JCM 14651 / NBRC 100331 / OCM 82 / Marburg) (Methanobacterium thermoautotrophicum) protein is Methyl-coenzyme M reductase I subunit alpha (mcrA).